The primary structure comprises 131 residues: uncharacterized protein (131 aa).

Positions 31-40 (AAATSRAAPL) are enriched in low complexity. Residues 31–131 (AAATSRAAPL…EAKTEQTKTP (101 aa)) are disordered.

This is an uncharacterized protein from Homo sapiens (Human).